Consider the following 270-residue polypeptide: Structure-specific endonuclease subunit SLX1 (270 aa).

Positions R9–V94 constitute a GIY-YIG domain. An SLX1-type zinc finger spans residues C182–C234.

Belongs to the SLX1 family. Forms a heterodimer with SLX4. Requires a divalent metal cation as cofactor. As to expression, expressed in testis, colon, bone marrow, brain, thymus and to a lesser extent in heart, kidney, skeletal muscle and spleen.

The protein localises to the nucleus. Catalytic subunit of the SLX1-SLX4 structure-specific endonuclease that resolves DNA secondary structures generated during DNA repair and recombination. Has endonuclease activity towards branched DNA substrates, introducing single-strand cuts in duplex DNA close to junctions with ss-DNA. Has a preference for 5'-flap structures, and promotes symmetrical cleavage of static and migrating Holliday junctions (HJs). Resolves HJs by generating two pairs of ligatable, nicked duplex products. The polypeptide is Structure-specific endonuclease subunit SLX1 (Slx1b) (Mus musculus (Mouse)).